Here is a 304-residue protein sequence, read N- to C-terminus: Recombination-associated protein RdgC (304 aa).

It belongs to the RdgC family.

It localises to the cytoplasm. Its subcellular location is the nucleoid. May be involved in recombination. This Shewanella sp. (strain MR-4) protein is Recombination-associated protein RdgC.